The primary structure comprises 31 residues: Photosystem I reaction center subunit XII (31 aa).

Residues 6–25 (TQILAALVVALLPAFLAFRL) traverse the membrane as a helical segment.

It belongs to the PsaM family.

It is found in the cellular thylakoid membrane. This is Photosystem I reaction center subunit XII from Synechocystis sp. (strain ATCC 27184 / PCC 6803 / Kazusa).